The following is a 237-amino-acid chain: Opacity protein opA57 (237 aa).

A signal peptide is located at residue alanine 1.

The protein belongs to the opacity porin family.

Its subcellular location is the cell outer membrane. Its function is as follows. Implicated in a number of adherence functions. OPA proteins are implicated in pathogenesis and are subject to phase variation. The protein is Opacity protein opA57 (opaK) of Neisseria gonorrhoeae.